The chain runs to 390 residues: Pyruvate dehydrogenase E1 component subunit alpha, somatic form, mitochondrial (390 aa).

Residues 1-29 constitute a mitochondrion transit peptide; that stretch reads MRKMLAAVSRVLSGASQKPASRVLVASRN. K63 carries the N6-acetyllysine; alternate modification. K63 carries the post-translational modification N6-succinyllysine; alternate. Pyruvate is bound by residues H92, Y118, R119, A157, G165, V167, D196, G197, A198, N225, and Y227. Residues Y118 and R119 each contribute to the thiamine diphosphate site. Residues G165, V167, D196, G197, A198, and N225 each coordinate thiamine diphosphate. D196 contacts Mg(2+). The Mg(2+) site is built by N225 and Y227. Phosphoserine; by PDK1 is present on S232. An N6-acetyllysine; alternate modification is found at K244. Position 244 is an N6-succinyllysine; alternate (K244). K277 is subject to N6-succinyllysine. H292 contributes to the thiamine diphosphate binding site. Residue S293 is modified to Phosphoserine; by PDK1, PDK2, PDK3 and PDK4. S295 carries the post-translational modification Phosphoserine. Phosphoserine; by PDK1, PDK2, PDK3 and PDK4 is present on S300. Y301 carries the phosphotyrosine modification. K313 is modified (N6-acetyllysine; alternate). K313 carries the N6-succinyllysine; alternate modification. Residues K321 and K336 each carry the N6-acetyllysine modification. K385 carries the N6-succinyllysine modification.

As to quaternary structure, heterotetramer of two PDHA1 and two PDHB subunits. The heterotetramer interacts with DLAT, and is part of the multimeric pyruvate dehydrogenase complex that contains multiple copies of pyruvate dehydrogenase (E1), dihydrolipoamide acetyltransferase (DLAT, E2) and lipoamide dehydrogenase (DLD, E3). These subunits are bound to an inner core composed of about 48 DLAT and 12 PDHX molecules. Requires thiamine diphosphate as cofactor. It depends on Mg(2+) as a cofactor. In terms of processing, phosphorylation at Ser-232, Ser-293 and Ser-300 by PDK family kinases inactivates the enzyme; for this phosphorylation at a single site is sufficient. Phosphorylation at Ser-293 interferes with access to active site, and thereby inactivates the enzyme. Dephosphorylation at all three sites, i.e. at Ser-232, Ser-293 and Ser-300, is required for reactivation. Post-translationally, acetylation alters the phosphorylation pattern. Deacetylated by SIRT3.

It is found in the mitochondrion matrix. The enzyme catalyses N(6)-[(R)-lipoyl]-L-lysyl-[protein] + pyruvate + H(+) = N(6)-[(R)-S(8)-acetyldihydrolipoyl]-L-lysyl-[protein] + CO2. Pyruvate dehydrogenase activity is inhibited by phosphorylation of PDHA1; it is reactivated by dephosphorylation. Functionally, the pyruvate dehydrogenase complex catalyzes the overall conversion of pyruvate to acetyl-CoA and CO(2), and thereby links the glycolytic pathway to the tricarboxylic cycle. This chain is Pyruvate dehydrogenase E1 component subunit alpha, somatic form, mitochondrial (PDHA1), found in Macaca fascicularis (Crab-eating macaque).